We begin with the raw amino-acid sequence, 104 residues long: Large ribosomal subunit protein bL21 (104 aa).

This sequence belongs to the bacterial ribosomal protein bL21 family. In terms of assembly, part of the 50S ribosomal subunit. Contacts protein L20.

In terms of biological role, this protein binds to 23S rRNA in the presence of protein L20. The sequence is that of Large ribosomal subunit protein bL21 from Streptococcus agalactiae serotype Ia (strain ATCC 27591 / A909 / CDC SS700).